A 574-amino-acid polypeptide reads, in one-letter code: FAD-linked oxidoreductase sor8 (574 aa).

Positions 1-27 (MYAPPFVRAFGIAVLAVLPSFSSPATA) are cleaved as a signal peptide. Residues Asn-58, Asn-112, Asn-136, Asn-266, Asn-312, Asn-363, and Asn-384 are each glycosylated (N-linked (GlcNAc...) asparagine). The 180-residue stretch at 126-305 (VIGTYVQYAV…YSMTVKAHAN (180 aa)) folds into the FAD-binding PCMH-type domain.

Belongs to the oxygen-dependent FAD-linked oxidoreductase family. FAD serves as cofactor.

It participates in secondary metabolite biosynthesis. In terms of biological role, FAD-linked oxidoreductase; part of the SOR gene cluster that mediates the biosynthesis of sorbicillinoids, a diverse group of yellow secondary metabolites that restrict growth of competing pathogenic fungi but not of bacteria. Sorbicillinoids biosynthesis requires the action of two PKSs. The SOR cluster is required for the production of trichodimerol and dihydrotrichotetronin, with sor2 being sufficient for production of trichodimerol, but not dihydrotrichotetronin in the light. Sor1 iteratively combines three acetyl units and the growing chain is modified by the ketoacyl reductase subunit, and optional by the enoyl reductase subunit in the second cycle. The polyketide is then handed over to the PKS sor2, which adds three more acetyl units, and two methyl groups. Sor2 releases an aldehyde, which undergoes spontaneous cyclization resulting in the formation of sorbicillin or 2',3'-dihydrosorbicillin. The monooxygenase sor5 oxidizes sorbicillin and 2',3'-dihydrosorbicillin to 2',3'-dihydrosorbicillinol and sorbicillinol, respectively. The oxidoreductase sor8 further converts sorbicillinol into oxosorbicillinol. Sorbicillinol is the building block for the other sorbicillinoids such as disorbicillinol, bisvertinolon, dihydrobisvertinolone, and dihydrotrichotetronine. This chain is FAD-linked oxidoreductase sor8, found in Hypocrea jecorina (strain QM6a) (Trichoderma reesei).